A 317-amino-acid polypeptide reads, in one-letter code: Porphobilinogen deaminase (317 aa).

Residue Cys-240 is modified to S-(dipyrrolylmethanemethyl)cysteine.

Belongs to the HMBS family. In terms of assembly, monomer. Dipyrromethane serves as cofactor.

The catalysed reaction is 4 porphobilinogen + H2O = hydroxymethylbilane + 4 NH4(+). It functions in the pathway porphyrin-containing compound metabolism; protoporphyrin-IX biosynthesis; coproporphyrinogen-III from 5-aminolevulinate: step 2/4. Its function is as follows. Tetrapolymerization of the monopyrrole PBG into the hydroxymethylbilane pre-uroporphyrinogen in several discrete steps. The sequence is that of Porphobilinogen deaminase from Nitratidesulfovibrio vulgaris (strain DSM 19637 / Miyazaki F) (Desulfovibrio vulgaris).